Reading from the N-terminus, the 127-residue chain is Glycine cleavage system H protein (127 aa).

In terms of domain architecture, Lipoyl-binding spans 24–106 (TATLGISAFA…YGEGWLVKVQ (83 aa)). Lys65 bears the N6-lipoyllysine mark.

The protein belongs to the GcvH family. The glycine cleavage system is composed of four proteins: P, T, L and H. The cofactor is (R)-lipoate.

Its function is as follows. The glycine cleavage system catalyzes the degradation of glycine. The H protein shuttles the methylamine group of glycine from the P protein to the T protein. The sequence is that of Glycine cleavage system H protein from Thermosynechococcus vestitus (strain NIES-2133 / IAM M-273 / BP-1).